Here is a 126-residue protein sequence, read N- to C-terminus: Small ribosomal subunit protein eS8 (126 aa).

The span at 1–10 shows a compositional bias: polar residues; sequence MAIWQGSSLR. Positions 1–35 are disordered; that stretch reads MAIWQGSSLRKPSGARSRRNKNKRNAEFGRNPAET.

This sequence belongs to the eukaryotic ribosomal protein eS8 family. As to quaternary structure, part of the 30S ribosomal subunit.

The protein is Small ribosomal subunit protein eS8 of Methanosphaera stadtmanae (strain ATCC 43021 / DSM 3091 / JCM 11832 / MCB-3).